The following is a 156-amino-acid chain: SsrA-binding protein (156 aa).

The interval 130-156 (KFDKRDDLKKKDAKRDIDRALRDKQKY) is disordered. Over residues 132 to 156 (DKRDDLKKKDAKRDIDRALRDKQKY) the composition is skewed to basic and acidic residues.

The protein belongs to the SmpB family.

It localises to the cytoplasm. Its function is as follows. Required for rescue of stalled ribosomes mediated by trans-translation. Binds to transfer-messenger RNA (tmRNA), required for stable association of tmRNA with ribosomes. tmRNA and SmpB together mimic tRNA shape, replacing the anticodon stem-loop with SmpB. tmRNA is encoded by the ssrA gene; the 2 termini fold to resemble tRNA(Ala) and it encodes a 'tag peptide', a short internal open reading frame. During trans-translation Ala-aminoacylated tmRNA acts like a tRNA, entering the A-site of stalled ribosomes, displacing the stalled mRNA. The ribosome then switches to translate the ORF on the tmRNA; the nascent peptide is terminated with the 'tag peptide' encoded by the tmRNA and targeted for degradation. The ribosome is freed to recommence translation, which seems to be the essential function of trans-translation. This is SsrA-binding protein from Exiguobacterium sibiricum (strain DSM 17290 / CCUG 55495 / CIP 109462 / JCM 13490 / 255-15).